The primary structure comprises 275 residues: Large ribosomal subunit protein uL2c (275 aa).

Disordered stretches follow at residues 1–28 (MGIRIYRSYTPGTRNRSSSDFSEITKSK) and 227–251 (PCDHPHGGGEGRSPIGRARPVTPWG). A compositionally biased stretch (polar residues) spans 10-22 (TPGTRNRSSSDFS).

The protein belongs to the universal ribosomal protein uL2 family. As to quaternary structure, part of the 50S ribosomal subunit.

The protein resides in the plastid. It localises to the chloroplast. The protein is Large ribosomal subunit protein uL2c (rpl2) of Rhodomonas salina (Cryptomonas salina).